Here is a 361-residue protein sequence, read N- to C-terminus: Phospho-N-acetylmuramoyl-pentapeptide-transferase (361 aa).

Transmembrane regions (helical) follow at residues 21 to 41 (YLTVRAILALFTALLLSLWIG), 74 to 94 (MGGIMILFAIGVSTLLWANLA), 97 to 117 (YVWFCLFVLFGYGAVGFVDDY), 132 to 152 (WKYFWLSVIALISAFGMYAIG), 168 to 188 (VMPQLGLFYIVLAYFVIVGTG), 199 to 219 (GLAIMPTVFVAAAFALIAWAT), 239 to 259 (LVIFCTAIVGAGLGFLWFNTY), 264 to 284 (FMGDVGSLALGGVLGTIAVLV), 288 to 308 (FLLVIMGGVFVVETLSVILQV), and 339 to 359 (VIIRFWIISLMLVLLGLITLK).

It belongs to the glycosyltransferase 4 family. MraY subfamily. It depends on Mg(2+) as a cofactor.

Its subcellular location is the cell inner membrane. It carries out the reaction UDP-N-acetyl-alpha-D-muramoyl-L-alanyl-gamma-D-glutamyl-meso-2,6-diaminopimeloyl-D-alanyl-D-alanine + di-trans,octa-cis-undecaprenyl phosphate = di-trans,octa-cis-undecaprenyl diphospho-N-acetyl-alpha-D-muramoyl-L-alanyl-D-glutamyl-meso-2,6-diaminopimeloyl-D-alanyl-D-alanine + UMP. It functions in the pathway cell wall biogenesis; peptidoglycan biosynthesis. Its function is as follows. Catalyzes the initial step of the lipid cycle reactions in the biosynthesis of the cell wall peptidoglycan: transfers peptidoglycan precursor phospho-MurNAc-pentapeptide from UDP-MurNAc-pentapeptide onto the lipid carrier undecaprenyl phosphate, yielding undecaprenyl-pyrophosphoryl-MurNAc-pentapeptide, known as lipid I. The sequence is that of Phospho-N-acetylmuramoyl-pentapeptide-transferase from Histophilus somni (strain 129Pt) (Haemophilus somnus).